Consider the following 748-residue polypeptide: Formate acetyltransferase (748 aa).

The PFL domain maps to 5 to 618 (NNHTNAWQGF…KTGNTPDGRK (614 aa)). Residue cysteine 412 is the S-acetylcysteine intermediate of the active site. The active-site Cysteine radical intermediate is the cysteine 413. Positions 625 to 748 (PGANPMHGRD…VISRTFHESM (124 aa)) constitute a Glycine radical domain. Glycine radical is present on glycine 723.

This sequence belongs to the glycyl radical enzyme (GRE) family. PFL subfamily. Homodimer.

It is found in the cytoplasm. The enzyme catalyses formate + acetyl-CoA = pyruvate + CoA. Its pathway is fermentation; pyruvate fermentation; formate from pyruvate: step 1/1. In terms of biological role, catalyzes the conversion of pyruvate to formate and acetyl-CoA. In Staphylococcus epidermidis (strain ATCC 35984 / DSM 28319 / BCRC 17069 / CCUG 31568 / BM 3577 / RP62A), this protein is Formate acetyltransferase (pflB).